The sequence spans 158 residues: Ribosome maturation factor RimP (158 aa).

Belongs to the RimP family.

The protein resides in the cytoplasm. Its function is as follows. Required for maturation of 30S ribosomal subunits. The polypeptide is Ribosome maturation factor RimP (Lactobacillus delbrueckii subsp. bulgaricus (strain ATCC 11842 / DSM 20081 / BCRC 10696 / JCM 1002 / NBRC 13953 / NCIMB 11778 / NCTC 12712 / WDCM 00102 / Lb 14)).